The following is a 104-amino-acid chain: UPF0145 protein VIBHAR_02090 (104 aa).

The protein belongs to the UPF0145 family.

The protein is UPF0145 protein VIBHAR_02090 of Vibrio campbellii (strain ATCC BAA-1116).